A 279-amino-acid polypeptide reads, in one-letter code: Pantothenate synthetase (279 aa).

ATP is bound at residue 26-33 (MGNLHEGH). Catalysis depends on His-33, which acts as the Proton donor. Gln-57 lines the (R)-pantoate pocket. Residue Gln-57 coordinates beta-alanine. Position 144–147 (144–147 (GKKD)) interacts with ATP. Gln-150 is a binding site for (R)-pantoate. Residues Val-173 and 181–184 (LSSR) contribute to the ATP site.

Belongs to the pantothenate synthetase family. In terms of assembly, homodimer.

It localises to the cytoplasm. The catalysed reaction is (R)-pantoate + beta-alanine + ATP = (R)-pantothenate + AMP + diphosphate + H(+). Its pathway is cofactor biosynthesis; (R)-pantothenate biosynthesis; (R)-pantothenate from (R)-pantoate and beta-alanine: step 1/1. Functionally, catalyzes the condensation of pantoate with beta-alanine in an ATP-dependent reaction via a pantoyl-adenylate intermediate. The protein is Pantothenate synthetase of Burkholderia cenocepacia (strain HI2424).